Here is a 216-residue protein sequence, read N- to C-terminus: MRIIMIGPPGSGKGTQTQLLSKYFHIPCISTGEILRKEIKKNKKTKKYIKKTINKGKLIKNSFIIKIIEKNIKKKKFFNGFILDGFPRNIEQAKSLSKKINIEYIIYLKIKYDDIIKRITGRLIHASSGRTYHKIFNPPKIKNKDDITQEKLCSRNDDNEKTIKIRLQEYKKHTNPLIKWIKKKKKIKFIEIHANQSIKIVNKKIIYNINNNNINK.

10-15 is an ATP binding site; that stretch reads GSGKGT. The tract at residues 30–59 is NMP; the sequence is STGEILRKEIKKNKKTKKYIKKTINKGKLI. AMP contacts are provided by residues T31, R36, 57–59, 85–88, and Q92; these read KLI and GFPR. The LID stretch occupies residues 121-158; that stretch reads GRLIHASSGRTYHKIFNPPKIKNKDDITQEKLCSRNDD. ATP-binding positions include R122 and 131-132; that span reads TY. Positions 155 and 166 each coordinate AMP. Residue Q196 coordinates ATP.

The protein belongs to the adenylate kinase family. Monomer.

Its subcellular location is the cytoplasm. It carries out the reaction AMP + ATP = 2 ADP. It participates in purine metabolism; AMP biosynthesis via salvage pathway; AMP from ADP: step 1/1. In terms of biological role, catalyzes the reversible transfer of the terminal phosphate group between ATP and AMP. Plays an important role in cellular energy homeostasis and in adenine nucleotide metabolism. This is Adenylate kinase from Buchnera aphidicola subsp. Cinara cedri (strain Cc).